A 236-amino-acid polypeptide reads, in one-letter code: UPF0502 protein BamMC406_5439 (236 aa).

It belongs to the UPF0502 family.

In Burkholderia ambifaria (strain MC40-6), this protein is UPF0502 protein BamMC406_5439.